Consider the following 208-residue polypeptide: ATP-dependent Clp protease proteolytic subunit (208 aa).

The active-site Nucleophile is Ser111. The active site involves His136.

Belongs to the peptidase S14 family. In terms of assembly, fourteen ClpP subunits assemble into 2 heptameric rings which stack back to back to give a disk-like structure with a central cavity, resembling the structure of eukaryotic proteasomes.

It is found in the cytoplasm. It catalyses the reaction Hydrolysis of proteins to small peptides in the presence of ATP and magnesium. alpha-casein is the usual test substrate. In the absence of ATP, only oligopeptides shorter than five residues are hydrolyzed (such as succinyl-Leu-Tyr-|-NHMec, and Leu-Tyr-Leu-|-Tyr-Trp, in which cleavage of the -Tyr-|-Leu- and -Tyr-|-Trp bonds also occurs).. Functionally, cleaves peptides in various proteins in a process that requires ATP hydrolysis. Has a chymotrypsin-like activity. Plays a major role in the degradation of misfolded proteins. The protein is ATP-dependent Clp protease proteolytic subunit of Vibrio campbellii (strain ATCC BAA-1116).